Consider the following 454-residue polypeptide: Bifunctional protein GlmU (454 aa).

The interval 1–226 is pyrophosphorylase; sequence MALNVVILAA…AIEVEGANNR (226 aa). UDP-N-acetyl-alpha-D-glucosamine is bound by residues 8–11, K22, Q73, 78–79, 100–102, G137, E151, N166, and N224; these read LAAG, GT, and YGD. D102 provides a ligand contact to Mg(2+). Mg(2+) is bound at residue N224. The linker stretch occupies residues 227–247; the sequence is VQLAQLERAYQAREAEKLMIA. An N-acetyltransferase region spans residues 248 to 454; the sequence is GANLRDPSRI…GWQRPVKIKE (207 aa). Residues R330 and K348 each coordinate UDP-N-acetyl-alpha-D-glucosamine. H360 (proton acceptor) is an active-site residue. UDP-N-acetyl-alpha-D-glucosamine contacts are provided by Y363 and N374. Acetyl-CoA contacts are provided by residues A377, 383-384, S402, A420, and R437; that span reads NY.

This sequence in the N-terminal section; belongs to the N-acetylglucosamine-1-phosphate uridyltransferase family. It in the C-terminal section; belongs to the transferase hexapeptide repeat family. As to quaternary structure, homotrimer. Requires Mg(2+) as cofactor.

Its subcellular location is the cytoplasm. It catalyses the reaction alpha-D-glucosamine 1-phosphate + acetyl-CoA = N-acetyl-alpha-D-glucosamine 1-phosphate + CoA + H(+). The catalysed reaction is N-acetyl-alpha-D-glucosamine 1-phosphate + UTP + H(+) = UDP-N-acetyl-alpha-D-glucosamine + diphosphate. It participates in nucleotide-sugar biosynthesis; UDP-N-acetyl-alpha-D-glucosamine biosynthesis; N-acetyl-alpha-D-glucosamine 1-phosphate from alpha-D-glucosamine 6-phosphate (route II): step 2/2. The protein operates within nucleotide-sugar biosynthesis; UDP-N-acetyl-alpha-D-glucosamine biosynthesis; UDP-N-acetyl-alpha-D-glucosamine from N-acetyl-alpha-D-glucosamine 1-phosphate: step 1/1. Its pathway is bacterial outer membrane biogenesis; LPS lipid A biosynthesis. Functionally, catalyzes the last two sequential reactions in the de novo biosynthetic pathway for UDP-N-acetylglucosamine (UDP-GlcNAc). The C-terminal domain catalyzes the transfer of acetyl group from acetyl coenzyme A to glucosamine-1-phosphate (GlcN-1-P) to produce N-acetylglucosamine-1-phosphate (GlcNAc-1-P), which is converted into UDP-GlcNAc by the transfer of uridine 5-monophosphate (from uridine 5-triphosphate), a reaction catalyzed by the N-terminal domain. The sequence is that of Bifunctional protein GlmU from Shewanella sp. (strain MR-7).